A 307-amino-acid polypeptide reads, in one-letter code: Elongation factor Ts, mitochondrial (307 aa).

The N-terminal 19 residues, 1–19 (MIFTRLTRFVGHGTGLRLY), are a transit peptide targeting the mitochondrion.

Belongs to the EF-Ts family.

Its subcellular location is the mitochondrion. Associates with the EF-Tu.GDP complex and induces the exchange of GDP to GTP. It remains bound to the aminoacyl-tRNA.EF-Tu.GTP complex up to the GTP hydrolysis stage on the ribosome. This Aedes aegypti (Yellowfever mosquito) protein is Elongation factor Ts, mitochondrial.